The primary structure comprises 223 residues: Deoxyribose-phosphate aldolase 1 (223 aa).

Residue Asp-91 is the Proton donor/acceptor of the active site. Lys-154 acts as the Schiff-base intermediate with acetaldehyde in catalysis. Lys-183 functions as the Proton donor/acceptor in the catalytic mechanism.

Belongs to the DeoC/FbaB aldolase family. DeoC type 1 subfamily.

It localises to the cytoplasm. The catalysed reaction is 2-deoxy-D-ribose 5-phosphate = D-glyceraldehyde 3-phosphate + acetaldehyde. The protein operates within carbohydrate degradation; 2-deoxy-D-ribose 1-phosphate degradation; D-glyceraldehyde 3-phosphate and acetaldehyde from 2-deoxy-alpha-D-ribose 1-phosphate: step 2/2. Functionally, catalyzes a reversible aldol reaction between acetaldehyde and D-glyceraldehyde 3-phosphate to generate 2-deoxy-D-ribose 5-phosphate. The chain is Deoxyribose-phosphate aldolase 1 from Bacillus licheniformis (strain ATCC 14580 / DSM 13 / JCM 2505 / CCUG 7422 / NBRC 12200 / NCIMB 9375 / NCTC 10341 / NRRL NRS-1264 / Gibson 46).